Consider the following 176-residue polypeptide: Disulfide bond formation protein B (176 aa).

The Cytoplasmic portion of the chain corresponds to 1–14 (MLRFLNQCSHGRGA). Residues 15–31 (WLLMAFTALALELTALW) form a helical membrane-spanning segment. Residues 32–49 (FQHVMLLKPCVLCIYERC) are Periplasmic-facing. Cysteine 41 and cysteine 44 are oxidised to a cystine. The helical transmembrane segment at 50–65 (ALFGVLGAALIGAIAP) threads the bilayer. Residues 66-71 (KTPLRY) are Cytoplasmic-facing. The chain crosses the membrane as a helical span at residues 72–89 (VAMVIWLYSAFRGVQLTY). Residues 90–144 (EHTMLQLYPSPFATCDFMARFPEWLPLDKWVPQVFVASGDCAERQWEFLGLEMPQ) lie on the Periplasmic side of the membrane. An intrachain disulfide couples cysteine 104 to cysteine 130. The helical transmembrane segment at 145 to 163 (WLLGIFIAYLIVAVLVVIS) threads the bilayer. Residues 164-176 (QPFKAKKRDLFGR) lie on the Cytoplasmic side of the membrane.

The protein belongs to the DsbB family.

It localises to the cell inner membrane. Functionally, required for disulfide bond formation in some periplasmic proteins. Acts by oxidizing the DsbA protein. This Escherichia coli O6:K15:H31 (strain 536 / UPEC) protein is Disulfide bond formation protein B.